The following is an 89-amino-acid chain: Small ribosomal subunit protein uS17 (89 aa).

It belongs to the universal ribosomal protein uS17 family. As to quaternary structure, part of the 30S ribosomal subunit.

One of the primary rRNA binding proteins, it binds specifically to the 5'-end of 16S ribosomal RNA. The polypeptide is Small ribosomal subunit protein uS17 (Acidovorax ebreus (strain TPSY) (Diaphorobacter sp. (strain TPSY))).